The sequence spans 333 residues: Foldase protein PrsA (333 aa).

The N-terminal stretch at 1-21 (MKKRTIATGLVTLLSIVTLAA) is a signal peptide. C22 carries the N-palmitoyl cysteine lipid modification. C22 carries S-diacylglycerol cysteine lipidation. The PpiC domain occupies 144-237 (KPEVTAQVIQ…PVYYIVKITK (94 aa)). A disordered region spans residues 296–333 (AASGSGSSGSTTTTTAASSAATTAADDQTTAAETTAAE).

Belongs to the PrsA family.

It is found in the cell membrane. The catalysed reaction is [protein]-peptidylproline (omega=180) = [protein]-peptidylproline (omega=0). Plays a major role in protein secretion by helping the post-translocational extracellular folding of several secreted proteins. In Streptococcus mutans serotype c (strain ATCC 700610 / UA159), this protein is Foldase protein PrsA.